We begin with the raw amino-acid sequence, 141 residues long: Hemoglobin subunit alpha-D (141 aa).

The 141-residue stretch at 1 to 141 (MLTAEDKKLI…VAAVLAEKYR (141 aa)) folds into the Globin domain. Heme b contacts are provided by His-58 and His-87.

This sequence belongs to the globin family. Heterotetramer of two alpha-D chains and two beta chains. Red blood cells.

Its function is as follows. Involved in oxygen transport from the lung to the various peripheral tissues. In Apus apus (Common swift), this protein is Hemoglobin subunit alpha-D (HBAD).